Reading from the N-terminus, the 233-residue chain is Putative glutathione peroxidase 7, chloroplastic (233 aa).

A chloroplast-targeting transit peptide spans 1 to 69; the sequence is MAFSYASFST…KSKNFSVYAR (69 aa). The active site involves C108.

Belongs to the glutathione peroxidase family.

Its subcellular location is the plastid. It localises to the chloroplast. The enzyme catalyses 2 glutathione + H2O2 = glutathione disulfide + 2 H2O. May constitute a glutathione peroxidase-like protective system against oxidative stresses. The protein is Putative glutathione peroxidase 7, chloroplastic (GPX7) of Arabidopsis thaliana (Mouse-ear cress).